A 186-amino-acid chain; its full sequence is Adenylate kinase (186 aa).

An ATP-binding site is contributed by 11 to 16 (GAGKGT). The tract at residues 31-60 (STGDILRAAVKNGTAMGIEAKKYMDAGDLV) is NMP. Residues threonine 32, arginine 37, 58-60 (DLV), 86-89 (GFPR), and glutamine 93 each bind AMP. Residues 127–137 (GRAIKEGRSDD) are LID. Arginine 128 is a binding site for ATP. Residues arginine 134 and arginine 145 each contribute to the AMP site. Glycine 173 serves as a coordination point for ATP.

It belongs to the adenylate kinase family. Monomer.

The protein localises to the cytoplasm. It catalyses the reaction AMP + ATP = 2 ADP. It functions in the pathway purine metabolism; AMP biosynthesis via salvage pathway; AMP from ADP: step 1/1. Functionally, catalyzes the reversible transfer of the terminal phosphate group between ATP and AMP. Plays an important role in cellular energy homeostasis and in adenine nucleotide metabolism. This chain is Adenylate kinase, found in Leptospira biflexa serovar Patoc (strain Patoc 1 / Ames).